The chain runs to 115 residues: Large ribosomal subunit protein bL20 (115 aa).

It belongs to the bacterial ribosomal protein bL20 family.

Functionally, binds directly to 23S ribosomal RNA and is necessary for the in vitro assembly process of the 50S ribosomal subunit. It is not involved in the protein synthesizing functions of that subunit. The sequence is that of Large ribosomal subunit protein bL20 from Cytophaga hutchinsonii (strain ATCC 33406 / DSM 1761 / CIP 103989 / NBRC 15051 / NCIMB 9469 / D465).